The sequence spans 223 residues: Endonuclease NucS (223 aa).

It belongs to the NucS endonuclease family.

It is found in the cytoplasm. Functionally, cleaves both 3' and 5' ssDNA extremities of branched DNA structures. The polypeptide is Endonuclease NucS (Mycolicibacterium gilvum (strain PYR-GCK) (Mycobacterium gilvum (strain PYR-GCK))).